The sequence spans 177 residues: uncharacterized protein (177 aa).

Low complexity-rich tracts occupy residues N78–N93 and S120–N130. Positions N78–N146 are disordered. Basic residues predominate over residues H131–N146.

This is an uncharacterized protein from Dictyostelium discoideum (Social amoeba).